The sequence spans 234 residues: Chalcone--flavanone isomerase 2 (234 aa).

Residues Thr50, Asn115, and Ser192 each contribute to the substrate site.

It belongs to the chalcone isomerase family.

The catalysed reaction is a chalcone = a flavanone.. It participates in secondary metabolite biosynthesis; flavonoid biosynthesis. Functionally, catalyzes the intramolecular cyclization of bicyclic chalcones into tricyclic (S)-flavanones. Responsible for the isomerization of 4,2',4',6'-tetrahydroxychalcone (also termed chalcone) into naringenin. This chain is Chalcone--flavanone isomerase 2 (CHI2), found in Vitis vinifera (Grape).